Reading from the N-terminus, the 61-residue chain is Small ribosomal subunit protein uS14B (61 aa).

C24, C27, C40, and C43 together coordinate Zn(2+).

Belongs to the universal ribosomal protein uS14 family. Zinc-binding uS14 subfamily. In terms of assembly, part of the 30S ribosomal subunit. Contacts proteins S3 and S10. Zn(2+) is required as a cofactor.

Binds 16S rRNA, required for the assembly of 30S particles and may also be responsible for determining the conformation of the 16S rRNA at the A site. The polypeptide is Small ribosomal subunit protein uS14B (Nocardia farcinica (strain IFM 10152)).